The chain runs to 532 residues: MSDLLILTMNYLSHGLVIHMIINGIVLALIIPSMTNKITQMVVDNDHVRLIEPFVLLVLMELISGIQKIFFIQKYQLDLQRKIHTGIEDYICKKISALPWNLTRTVLSNADLGKSKNIIVYSTLSLIDILTYQSSHLFAFIGYTLWILYNSPITLTIYILLIPIIVFQIKYKNITNPSVYNKIWETYRNLASNQFMDIIHSRGPEIHDKMIKTINEYEETRSTNTLNDNKYVESINLAITLLTRFNLLIVLLIDPNISSFMIQLQFGTIIKNTSNLFCSAYRKYQDLRKEQLNIDNVLPTIESPIIKQINDFESICINKLVYEYSKTEFKLELKSPIELFRSQIVLLEGKSGSGKSSFMDIIAGVIPCNQYQFDIKIDDTVTNGGFQTLNKKRIYIEQFATSNWNIMAKDFITGHYRFSKIIMEHSLTMANCKDFVTIEEVSSTNCSKLSGGQKGRIEIARMIYAIIMDRPSILILDEIDKSLQTDLAVSIIESVIKICRSNRILCIMSAHNNEVKKLNFDMIIPMNNGIIG.

The next 5 helical transmembrane spans lie at 11 to 31, 51 to 71, 126 to 146, 147 to 167, and 231 to 253; these read YLSH…ALII, IEPF…KIFF, LIDI…YTLW, ILYN…IIVF, and YVES…VLLI. In terms of domain architecture, ABC transporter spans 315 to 531; that stretch reads ICINKLVYEY…MIIPMNNGII (217 aa). An ATP-binding site is contributed by 349-356; the sequence is GKSGSGKS.

Its subcellular location is the membrane. This is an uncharacterized protein from Acanthamoeba polyphaga mimivirus (APMV).